The sequence spans 952 residues: Eukaryotic translation initiation factor 3 subunit A (952 aa).

The PCI domain maps to 315 to 491 (HAERAGIVND…QTITFVSTPP (177 aa)). The stretch at 522-849 (DAFAAAIAQA…RRQAEKAAAT (328 aa)) forms a coiled coil. The segment covering 757–797 (EKVIKRKREEKERKLKEAREAEERKRKEEEEAAQKAEEEAR) has biased composition (basic and acidic residues). Residues 757-952 (EKVIKRKREE…RGMPSTRGGA (196 aa)) form a disordered region. The segment covering 798–809 (AAAALEAEAAAA) has biased composition (low complexity). The segment covering 810–844 (EQRRAEREAQRQSDLERIRAQQEREEEALRRRQAE) has biased composition (basic and acidic residues). 2 stretches are compositionally biased toward low complexity: residues 856–878 (RPPA…GGPS) and 893–918 (GAPV…SNGP).

This sequence belongs to the eIF-3 subunit A family. In terms of assembly, component of the eukaryotic translation initiation factor 3 (eIF-3) complex.

Its subcellular location is the cytoplasm. In terms of biological role, RNA-binding component of the eukaryotic translation initiation factor 3 (eIF-3) complex, which is involved in protein synthesis of a specialized repertoire of mRNAs and, together with other initiation factors, stimulates binding of mRNA and methionyl-tRNAi to the 40S ribosome. The eIF-3 complex specifically targets and initiates translation of a subset of mRNAs involved in cell proliferation. This chain is Eukaryotic translation initiation factor 3 subunit A, found in Cryptococcus neoformans var. neoformans serotype D (strain B-3501A) (Filobasidiella neoformans).